The chain runs to 593 residues: Mitoguardin 2 (593 aa).

The next 2 membrane-spanning stretches (helical) occupy residues 11-31 and 42-62; these read MIQA…TTFG and PGLR…ALAA. Disordered regions lie at residues 98-134, 150-171, and 197-229; these read PSVK…HSGS, TAAC…TTDG, and VGQR…PESQ. 2 stretches are compositionally biased toward low complexity: residues 106-116 and 124-134; these read SRRVQSPSSKS and SSIEPSKHSGS. Position 132 is a phosphoserine (S132). Residues 205-218 show a composition bias toward polar residues; sequence STPTPGDSLQNPDT. At T206 the chain carries Phosphothreonine. Phosphoserine is present on residues S220, S224, and S228. T273 carries the phosphothreonine modification. Phosphoserine is present on residues S276 and S295. The FFAT motif lies at 292 to 298; it reads SFFSATE.

It belongs to the mitoguardin family. In terms of assembly, homodimer and heterodimer; forms heterodimers with MIGA1. Interacts with PLD6/MitoPLD. Interacts (via phosphorylated FFAT motif) with MOSPD2. Post-translationally, phosphorylation at Ser-295 of the FFAT motif activates interaction with MOSPD2.

Its subcellular location is the mitochondrion outer membrane. Functionally, regulator of mitochondrial fusion. Acts by forming homo- and heterodimers at the mitochondrial outer membrane and facilitating the formation of PLD6/MitoPLD dimers. May act by regulating phospholipid metabolism via PLD6/MitoPLD. The polypeptide is Mitoguardin 2 (Mus musculus (Mouse)).